The primary structure comprises 882 residues: MNAPAKFSTSQIRSDFLAFFEGKGHTIVPSAPLVPGNDPTLLFTNSGMVQFKDVFLGAEKRSYVRAADVQRCLRAGGKHNDLDSVGYTARHHTFFEMLGNWSFGDYFKKDAIAWAWELLTQVWKLPADRLLVTVYHTDEEAFELWRDMIGIPESRIVRIGDNKGAPYASDNFWQMADTGPCGPCTEIFFDHGDHIAGGPPGSPDEDGDRFIEIWNLVFMQFDRQPDGTLVALPAPCVDTGMGLERLAAILQHVHTNYEIDVFQALIGKASALTGIADLENKSLRVIADHIRACSFLIVDGVLPSNEGRGYVLRRIIRRALRHGWMLGVRQLFFSKMVPTLVELMGEAYPELVVAQETVARALLAEEERFAETLDAGMKIFDDVASRSQEIIPGADAFRLYDTYGFPVDLTADIARERGMRVDMEGFEFAMERQRETARAAGKFGGGVALPADLVATMAPTVFLGYEAQDADALKVVALLKQGRPVDRAEAGDEVIVFTDRTPFYAESGGQVGDSGQLSGTDVSIEVADTQKFAGQFHGHVGRIAEGALKLGDVLSGGIDVQRRGKTILNHSATHLLHAALREVLGTHVQQKGSLVAPDRLRFDFSHFQPITAEELAVIERKVNAEVRTNHSVEVHNMAMQEALDFGAMALFGEKYGERVRVLKMGGYSTELCGGTHVSRTGDIGLFKITSEGGVSSGVRRIEAVTGQGALDYVAEEERRLGEAANLLGGNSTEIVDKVRALTDRQKRLERELESLKAKLASGATADLGASAVDVAGVKVIAVRLEGFDAKALREAMDRLKQQLGDSVIVLAGAAGGKVALVAGVNGSPTGKVKAGELLGHIASQIGGKGGGRPDLAQGGGEDGPALATALQGVPSWVKQHLG.

His-570, His-574, Cys-672, and His-676 together coordinate Zn(2+).

Belongs to the class-II aminoacyl-tRNA synthetase family. Zn(2+) is required as a cofactor.

Its subcellular location is the cytoplasm. It catalyses the reaction tRNA(Ala) + L-alanine + ATP = L-alanyl-tRNA(Ala) + AMP + diphosphate. Functionally, catalyzes the attachment of alanine to tRNA(Ala) in a two-step reaction: alanine is first activated by ATP to form Ala-AMP and then transferred to the acceptor end of tRNA(Ala). Also edits incorrectly charged Ser-tRNA(Ala) and Gly-tRNA(Ala) via its editing domain. The protein is Alanine--tRNA ligase of Xanthomonas campestris pv. campestris (strain ATCC 33913 / DSM 3586 / NCPPB 528 / LMG 568 / P 25).